Consider the following 688-residue polypeptide: MAPAADPRSLLVLLQVLGLALAQIRGLPGEPGPPGPPGPPGVPGSDGIDGDKGPPGKAGPPGPKGEPGKAGTDGPDGKPGIDGLTGAKGEPGPAGIPGVKGQPGLPGPPGLPGPGFAGPPGPPGPVGLPGEIGLTGPKGDPGPEGPSGPPGPPGKPGRPGTIQGLEGSADFLCPTNCPAGVKGPPGLQGVKGHPGRRGLLGDSGRQGKPGPKGDVGASGEQGIPGPPGPQGVRGYPGMAGPKGETGPQGYKGMVGSVGAAGSPGEEGPRGPPGRAGEKGDVGSQGVRGPQGITGPKGATGPPGIDGKDGTPGTPGVKGSAGQAGRPGNPGHQGLAGVPGMPGTKGGPGDKGEPGRQGFPGVSGPPGKEGEPGPRGEIGPQGIMGQKGDHGERGPVGQPGPQGRQGPKGEQGPPGIPGPQGLPGIKGDKGSPGKTGPRGGVGDPGVAGLPGEKGEKGESGEPGPKGQQGVRGEPGYPGPSGDAGAPGVQGYPGPPGPRGLVGDRGLPGQPGRQGVAGRDASDQHIEDVVLKMLQEQLAEMAVSAKREALGATGMMGPPGPPGPPGYPGKQGPHGHPGPRGVPGIVGAVGQIGNTGPKGKRGEKGDQGEVGRGHPGMPGPPGIPGLPGRPGQAINGKDGDRGAPGAPGEAGRPGLPGPIGLPGFCEPAACLGASAYASGRLTEPGSIKGP.

The signal sequence occupies residues 1-22 (MAPAADPRSLLVLLQVLGLALA). Residues 26-162 (GLPGEPGPPG…PGKPGRPGTI (137 aa)) are triple-helical region 4 (COL4). Disordered stretches follow at residues 26-520 (GLPG…RDAS), 549-578 (GATG…PGPR), and 590-662 (IGNT…LPGF). Pro residues-rich tracts occupy residues 30–42 (EPGP…PPGV) and 105–126 (LPGP…PGPV). Positions 128–138 (LPGEIGLTGPK) are enriched in low complexity. The span at 143 to 156 (PEGPSGPPGPPGKP) shows a compositional bias: pro residues. A 4-hydroxyproline modification is found at Pro159. Positions 163–179 (QGLEGSADFLCPTNCPA) are nonhelical region 4 (NC4). The O-linked (Xyl...) (glycosaminoglycan) serine glycan is linked to Ser168. The segment at 180–518 (GVKGPPGLQG…PGRQGVAGRD (339 aa)) is triple-helical region 3 (COL3). A 5-hydroxylysine modification is found at Lys182. A glycan (O-linked (Gal...) hydroxylysine) is linked at Lys182. Composition is skewed to low complexity over residues 251–265 (KGMV…SPGE) and 394–412 (PVGQ…EQGP). Residues 435–444 (GPRGGVGDPG) are compositionally biased toward gly residues. Positions 497–506 (RGLVGDRGLP) are enriched in low complexity. The nonhelical region 3 (NC3) stretch occupies residues 519–548 (ASDQHIEDVVLKMLQEQLAEMAVSAKREAL). A triple-helical region 2 (COL2) region spans residues 549-631 (GATGMMGPPG…PGLPGRPGQA (83 aa)). Residues 556-565 (PPGPPGPPGY) show a composition bias toward pro residues. The segment covering 598–610 (KRGEKGDQGEVGR) has biased composition (basic and acidic residues). Residues 632–633 (IN) form a nonhelical region 2 (NC2) region. The segment at 634 to 663 (GKDGDRGAPGAPGEAGRPGLPGPIGLPGFC) is triple-helical region 1 (COL1). Low complexity predominate over residues 641–651 (APGAPGEAGRP). The interval 664-688 (EPAACLGASAYASGRLTEPGSIKGP) is nonhelical region 1 (NC1).

Belongs to the fibril-associated collagens with interrupted helices (FACIT) family. In terms of assembly, heterotrimer of an alpha 1(IX), an alpha 2(IX) and an alpha 3(IX) chain. The chains are linked to each other by interchain disulfide bonds. Trimers are also cross-linked via hydroxylysines. Prolines at the third position of the tripeptide repeating unit (G-X-Y) are hydroxylated in some or all of the chains. In terms of processing, covalently linked to the telopeptides of type II collagen by hydroxylysine-derived cross-links.

The protein localises to the secreted. Its subcellular location is the extracellular space. It is found in the extracellular matrix. Structural component of hyaline cartilage and vitreous of the eye. The polypeptide is Collagen alpha-2(IX) chain (Bos taurus (Bovine)).